The primary structure comprises 255 residues: Aliphatic sulfonates import ATP-binding protein SsuB (255 aa).

Positions 12–233 (LLLNAVSKHY…RLGSVRLAEL (222 aa)) constitute an ABC transporter domain. Residue 44 to 51 (GRSGGGKS) coordinates ATP.

This sequence belongs to the ABC transporter superfamily. Aliphatic sulfonates importer (TC 3.A.1.17.2) family. The complex is composed of two ATP-binding proteins (SsuB), two transmembrane proteins (SsuC) and a solute-binding protein (SsuA).

It localises to the cell inner membrane. It catalyses the reaction ATP + H2O + aliphatic sulfonate-[sulfonate-binding protein]Side 1 = ADP + phosphate + aliphatic sulfonateSide 2 + [sulfonate-binding protein]Side 1.. Part of the ABC transporter complex SsuABC involved in aliphatic sulfonates import. Responsible for energy coupling to the transport system. This chain is Aliphatic sulfonates import ATP-binding protein SsuB, found in Escherichia coli (strain K12).